The primary structure comprises 1015 residues: DNA polymerase catalytic subunit (1015 aa).

The protein belongs to the DNA polymerase type-B family. In terms of assembly, forms a complex with the major DNA-binding protein BALF2, the DNA polymerase processivity factor BMRF1, and the alkaline exonuclease BGLF5. Interacts with the putative helicase-primase complex composed of BBLF4, BSLF1 and BBLF2/3 proteins; these interactions may coordinate leading and lagging strand DNA synthesis at the replication fork.

The protein localises to the host nucleus. The enzyme catalyses DNA(n) + a 2'-deoxyribonucleoside 5'-triphosphate = DNA(n+1) + diphosphate. Its function is as follows. Replicates viral genomic DNA in the late phase of lytic infection, producing long concatemeric DNA. The replication complex is composed of six viral proteins: the DNA polymerase, processivity factor, primase, primase-associated factor, helicase, and ssDNA-binding protein. The polypeptide is DNA polymerase catalytic subunit (Homo sapiens (Human)).